The chain runs to 92 residues: MGRSLKKGPFVDEHLMKKVEAQANDEKKKVIKTWSRRSTIFPSFIGYTIAVYDGRKHVPVYIQEDMVGHKLGEFAPTRTYKGHAADDKKTRR.

It belongs to the universal ribosomal protein uS19 family.

Protein S19 forms a complex with S13 that binds strongly to the 16S ribosomal RNA. The protein is Small ribosomal subunit protein uS19 of Streptococcus agalactiae serotype Ia (strain ATCC 27591 / A909 / CDC SS700).